The following is an 887-amino-acid chain: Alpha-amylase 3, chloroplastic (887 aa).

The N-terminal 55 residues, 1 to 55, are a transit peptide targeting the chloroplast; sequence MSTVPIESLLHHSYLRHNSKVNRGNRSFIPISLNLRSHFTSNKLLHSIGKSVGVS. Cys-499 and Cys-587 are oxidised to a cystine. Residues 545 to 546 and 664 to 669 contribute to the substrate site; these read YM and RLDFVR. The Nucleophile role is filled by Asp-666. Glu-691 acts as the Proton donor in catalysis. Substrate-binding positions include Trp-693, Ser-695, Gln-712, Lys-754, 760–762, His-773, Gln-779, Lys-857, and Trp-884; that span reads GWW.

Belongs to the glycosyl hydrolase 13 family. It depends on Ca(2+) as a cofactor. Expressed in developing siliques.

It localises to the plastid. Its subcellular location is the chloroplast. The enzyme catalyses Endohydrolysis of (1-&gt;4)-alpha-D-glucosidic linkages in polysaccharides containing three or more (1-&gt;4)-alpha-linked D-glucose units.. Redox-regulated, with the highest activity under reducing conditions. The midpoint redox potential is -329 mV. The disulfide bridge between Cys-499 and Cys-587 inhibits catalysis. Inhibited by CuCl(2) and H(2)O(2). Its function is as follows. Possesses endoamylolytic activity in vitro, but seems not required for breakdown of transitory starch in leaves. May be involved in the determination of the final structure of glucans by shortening long linear phospho-oligosaccharides in the chloroplast stroma. Can act on both soluble and insoluble glucan substrates to release small linear and branched malto-oligosaccharides. Works synergistically with beta-amylase toward efficient starch degradation. Has activity against p-nitrophenyl maltoheptaoside (BPNP-G7), amylopectin and beta-limit dextrin. Involved in stress-induced starch degradation. This is Alpha-amylase 3, chloroplastic from Arabidopsis thaliana (Mouse-ear cress).